A 772-amino-acid chain; its full sequence is Potassium transporter 24 (772 aa).

Over 1–23 (MDVEGGGAAARRKGGWWWWREEA) the chain is Cytoplasmic. A helical membrane pass occupies residues 24–44 (VLAYQSLGVVYGEVAAAPLYV). The Extracellular segment spans residues 45-66 (YRSAFAGGDIEHSAGNEEIYGA). A helical transmembrane segment spans residues 67-87 (LSLVFWTLTLVPLAKYVLLVL). Residues 88-150 (RADDAGEGGT…ALERHRVLQR (63 aa)) are Cytoplasmic-facing. Residues 151 to 171 (LLLLLALLGTCMVIGDGVLTP) form a helical membrane-spanning segment. At 172 to 192 (AVSVFSAVSGLELSMDKDQHK) the chain is on the extracellular side. The chain crosses the membrane as a helical span at residues 193-213 (YILLPITCVILVCLFALQHYG). Over 214–216 (THR) the chain is Cytoplasmic. Residues 217–237 (VGFLFAPIVCLWLLCISIIGV) traverse the membrane as a helical segment. Residues 238–265 (YNIIHWNPHVYQALSPYYMYKFLRKTQT) lie on the Extracellular side of the membrane. A helical membrane pass occupies residues 266 to 286 (GGWMSLGGILLCVTGSEAMYA). Residues 287–298 (DLGHFTQNSIKM) are Cytoplasmic-facing. Residues 299-319 (AFTLLVYPALVLAYMGQAAYI) form a helical membrane-spanning segment. Topologically, residues 320–344 (SRHHNFEDGSHIGFYVSVPEKIRWP) are extracellular. Residues 345 to 365 (VLGIAILASVVGSQAIITGTF) form a helical membrane-spanning segment. Topologically, residues 366-392 (SIIKQCSSLNCFPRVKIVHTSSTVHGQ) are cytoplasmic. The helical transmembrane segment at 393–413 (IYIPEINWILMILCLSVTIGF) threads the bilayer. Residues 414-423 (RDTKHLTNAQ) are Extracellular-facing. A helical membrane pass occupies residues 424–444 (GLAVITVMLVTTCLMSLVILL). Topologically, residues 445–449 (CWNKS) are cytoplasmic. The chain crosses the membrane as a helical span at residues 450–470 (IVYALSFLLFFGAIEVIYFAA). Residues 471 to 477 (SLVKFHE) lie on the Extracellular side of the membrane. Residues 478–498 (GAWVPVTLSFIFMMVMCVWHY) form a helical membrane-spanning segment. Residues 499–772 (GTKKKYEFDV…TVEVGMICLV (274 aa)) are Cytoplasmic-facing. The segment at 656-684 (EEGEFDGSDSTGSSAHKEINPNTTAPKPK) is disordered.

This sequence belongs to the HAK/KUP transporter (TC 2.A.72.3) family.

The protein localises to the membrane. In terms of biological role, high-affinity potassium transporter. The polypeptide is Potassium transporter 24 (HAK24) (Oryza sativa subsp. japonica (Rice)).